The following is a 100-amino-acid chain: UPF0213 protein YhbQ (100 aa).

The region spanning 2 to 77 is the GIY-YIG domain; it reads TPWFLYLIRT…KQLTKRQKER (76 aa).

The protein belongs to the UPF0213 family.

The protein is UPF0213 protein YhbQ of Shigella dysenteriae serotype 1 (strain Sd197).